The chain runs to 365 residues: Peptide chain release factor 2 (365 aa).

Q252 carries the N5-methylglutamine modification.

Belongs to the prokaryotic/mitochondrial release factor family. In terms of processing, methylated by PrmC. Methylation increases the termination efficiency of RF2.

It localises to the cytoplasm. In terms of biological role, peptide chain release factor 2 directs the termination of translation in response to the peptide chain termination codons UGA and UAA. In Pseudoalteromonas translucida (strain TAC 125), this protein is Peptide chain release factor 2.